The chain runs to 254 residues: MLGTGDPNLHSSCILSRKKGRQGHHIMKHEQIGSQMTEFSWKDIINALALANMILGLFSIFCSFSRKSYCASWMLLISFLLDIAIGTMTKHLNIPHKLGLELNDFAIFTTFGLASALLLGVDGPLNGFLAIIYVLTTSFRMCFYSTGGATSGYKGLPCPYASCVLASTCLLTKGNTFILCCMASLMILFMIDQSCYPHDEILDSDNWKKIVYIGGVILLFFSPFPLTAFYCLTWSLSYIFSPETLWGRGVRIKP.

Helical transmembrane passes span 44–64 (IINA…FCSF), 69–89 (YCAS…GTMT), 113–135 (LASA…IYVL), 171–191 (LTKG…LFMI), and 210–230 (IVYI…TAFY).

It is found in the membrane. This chain is Transmembrane protein 269, found in Mus musculus (Mouse).